The following is a 39-amino-acid chain: Mating pheromone Er-11 (39 aa).

Cystine bridges form between C3–C19, C10–C34, and C15–C26.

As to quaternary structure, homodimer.

The protein resides in the secreted. Its function is as follows. Mating ciliate pheromones (or gamones) are diffusible extracellular communication signals that distinguish different intraspecific classes of cells commonly referred to as 'mating types'. They prepare the latter for conjugation by changing their cell surface properties. This is Mating pheromone Er-11 (MAT11) from Euplotes raikovi.